Here is a 715-residue protein sequence, read N- to C-terminus: MFNIHSVEIDWGGRPLKLETGKIARQADGAVVATYGETVVLATVVAAKSAKEGVDFLPLTVDYIEKTYAAGRIPGGYFKREGRPTEKETLVSRLIDRPIRPLFVDGWRNETQVIVTVLSHDMENDPDILALVASSAALTLSGAPFKGPIGAARVGFINDEYVLNPTLDEMVDTQLDLVVAGTADAVLMVESEAKELNEDIMLGAVMFGHRHFQPVVQAIIELAEKAAKEPREVAVVDESVLEKEILGLIEPELRAAYAIPVKQDRYAAVGKAKEKVMAHYFPEGQEPQYDKLRIAGVFKELEAKIVRWNILDTGKRIDGRDSKTVRNIVAQVGVLPRAHGSALFTRGETQALVVTTLGTGEDEQYIDSLSGTYKETFLLHYNFPPYSVGETGRMGGTKRREIGHGKLAWRAIHPVLPPHHEFPYTLRVVSEITESNGSSSMASVCGASLALMDAGVPLKRPTAGIAMGLILEGERFAVLSDILGDEDHLGDMDFKVAGTEQGITSLQMDIKIAGITEEIMKVALGQAKDGRIHILGEMSKALTNARAELGEYAPRIETFKIATDKIREVIGTGGKVIREIVEKTGAKVNIDDDGTVKVASSDGESIKAAIKWIKSIASDPELNAIYDGTVVKVMEFGAFVNFFGAKDGLVHISQLAAGRVQKTSDVVKEGDKVKVKLLGFDDRGKTRLSMKVVDQETGEDLEAKQKAAEGATAAE.

Residues Asp487 and Asp493 each contribute to the Mg(2+) site. The KH domain occupies Pro554–Ile613. Positions Asn623–Lys691 constitute an S1 motif domain. The disordered stretch occupies residues Glu696 to Glu715.

Belongs to the polyribonucleotide nucleotidyltransferase family. Mg(2+) serves as cofactor.

It localises to the cytoplasm. It catalyses the reaction RNA(n+1) + phosphate = RNA(n) + a ribonucleoside 5'-diphosphate. Its function is as follows. Involved in mRNA degradation. Catalyzes the phosphorolysis of single-stranded polyribonucleotides processively in the 3'- to 5'-direction. This is Polyribonucleotide nucleotidyltransferase from Rhodopseudomonas palustris (strain BisB18).